Consider the following 282-residue polypeptide: Aldo-keto reductase MT3049 (282 aa).

Tyr-57 serves as the catalytic Proton donor. NADPH is bound by residues Leu-197, Val-235, Arg-237, Ser-238, Ala-239, Arg-243, Ser-246, Asn-247, and Arg-273.

The protein belongs to the aldo/keto reductase family.

This is Aldo-keto reductase MT3049 from Mycobacterium tuberculosis (strain CDC 1551 / Oshkosh).